The sequence spans 312 residues: Beta-ketoacyl-[acyl-carrier-protein] synthase III (312 aa).

Residues Cys112 and His237 contribute to the active site. The segment at 238-242 (QANIR) is ACP-binding. Asn267 is an active-site residue.

The protein belongs to the thiolase-like superfamily. FabH family. Homodimer.

The protein resides in the cytoplasm. It catalyses the reaction malonyl-[ACP] + acetyl-CoA + H(+) = 3-oxobutanoyl-[ACP] + CO2 + CoA. Its pathway is lipid metabolism; fatty acid biosynthesis. Catalyzes the condensation reaction of fatty acid synthesis by the addition to an acyl acceptor of two carbons from malonyl-ACP. Catalyzes the first condensation reaction which initiates fatty acid synthesis and may therefore play a role in governing the total rate of fatty acid production. Possesses both acetoacetyl-ACP synthase and acetyl transacylase activities. Its substrate specificity determines the biosynthesis of branched-chain and/or straight-chain of fatty acids. The protein is Beta-ketoacyl-[acyl-carrier-protein] synthase III of Listeria welshimeri serovar 6b (strain ATCC 35897 / DSM 20650 / CCUG 15529 / CIP 8149 / NCTC 11857 / SLCC 5334 / V8).